A 924-amino-acid chain; its full sequence is Protein translocase subunit SecA (924 aa).

Residues Gln-87, 105 to 109 (GEGKT), and Asp-517 each bind ATP. A disordered region spans residues 886-906 (VPAADRDPNDPSTWGKVGRNE). Zn(2+) contacts are provided by Cys-908, Cys-910, Cys-919, and His-920.

The protein belongs to the SecA family. Monomer and homodimer. Part of the essential Sec protein translocation apparatus which comprises SecA, SecYEG and auxiliary proteins SecDF-YajC and YidC. Requires Zn(2+) as cofactor.

The protein localises to the cell inner membrane. It localises to the cytoplasm. The enzyme catalyses ATP + H2O + cellular proteinSide 1 = ADP + phosphate + cellular proteinSide 2.. Part of the Sec protein translocase complex. Interacts with the SecYEG preprotein conducting channel. Has a central role in coupling the hydrolysis of ATP to the transfer of proteins into and across the cell membrane, serving both as a receptor for the preprotein-SecB complex and as an ATP-driven molecular motor driving the stepwise translocation of polypeptide chains across the membrane. The chain is Protein translocase subunit SecA from Azorhizobium caulinodans (strain ATCC 43989 / DSM 5975 / JCM 20966 / LMG 6465 / NBRC 14845 / NCIMB 13405 / ORS 571).